We begin with the raw amino-acid sequence, 203 residues long: Guanylate kinase (203 aa).

One can recognise a Guanylate kinase-like domain in the interval 3-181 (GSLFIVAAPS…AHTDLRAIVQ (179 aa)). Residue 10–17 (APSGAGKT) participates in ATP binding.

It belongs to the guanylate kinase family.

The protein localises to the cytoplasm. It catalyses the reaction GMP + ATP = GDP + ADP. Essential for recycling GMP and indirectly, cGMP. This chain is Guanylate kinase, found in Nitrosococcus oceani (strain ATCC 19707 / BCRC 17464 / JCM 30415 / NCIMB 11848 / C-107).